The sequence spans 48 residues: MSGKRVLACDICKSRNYSVTSAKKSDTRLTVKKFCKRCNGHTLHVETR.

The protein belongs to the bacterial ribosomal protein bL33 family.

The polypeptide is Large ribosomal subunit protein bL33A (Shouchella clausii (strain KSM-K16) (Alkalihalobacillus clausii)).